A 107-amino-acid polypeptide reads, in one-letter code: Iron-binding protein IscA (107 aa).

3 residues coordinate Fe cation: C35, C99, and C101.

The protein belongs to the HesB/IscA family. As to quaternary structure, homodimer; may form tetramers and higher multimers. It depends on Fe cation as a cofactor.

Its function is as follows. Is able to transfer iron-sulfur clusters to apo-ferredoxin. Multiple cycles of [2Fe2S] cluster formation and transfer are observed, suggesting that IscA acts catalytically. Recruits intracellular free iron so as to provide iron for the assembly of transient iron-sulfur cluster in IscU in the presence of IscS, L-cysteine and the thioredoxin reductase system TrxA/TrxB. The polypeptide is Iron-binding protein IscA (Photorhabdus laumondii subsp. laumondii (strain DSM 15139 / CIP 105565 / TT01) (Photorhabdus luminescens subsp. laumondii)).